Consider the following 233-residue polypeptide: Small ribosomal subunit protein uS3 (233 aa).

The KH type-2 domain maps to 39-107 (VRQFLTKELS…PAQINTYEIR (69 aa)).

This sequence belongs to the universal ribosomal protein uS3 family. In terms of assembly, part of the 30S ribosomal subunit. Forms a tight complex with proteins S10 and S14.

Its function is as follows. Binds the lower part of the 30S subunit head. Binds mRNA in the 70S ribosome, positioning it for translation. The polypeptide is Small ribosomal subunit protein uS3 (Hamiltonella defensa subsp. Acyrthosiphon pisum (strain 5AT)).